Consider the following 612-residue polypeptide: Baeyer-Villiger monooxygenase 4 (612 aa).

Residues Glu99, 107-110 (TWYW), Asp119, Tyr125, and Ala169 each bind FAD. 117 to 119 (QCD) lines the NADP(+) pocket. NADP(+)-binding positions include 253 to 259 (TGATGVQ), 276 to 277 (RT), and 393 to 394 (KR).

Belongs to the FAD-binding monooxygenase family. FAD serves as cofactor.

Catalyzes a Baeyer-Villiger oxidation reaction, i.e. the insertion of an oxygen atom into a carbon-carbon bond adjacent to a carbonyl, which converts ketones to esters or lactones using NADPH as an electron donor. Has a broad substrate scope and oxidizes different compounds including substituted and unsubstituted alicyclic, bicyclic-, aliphatic-ketones, ketones with an aromatic moiety, and sulfides. The highest activities are measured for 2- and 3-methylcyclohexanone, phenylacetone, bicyclo[3.2.0]hept-2-en-6-one and menthone. Cannot use NADH instead of NADPH. Is not active on benzaldehyde. The chain is Baeyer-Villiger monooxygenase 4 from Dietzia sp. (strain D5).